Here is a 103-residue protein sequence, read N- to C-terminus: Small ribosomal subunit protein uS10 (103 aa).

Belongs to the universal ribosomal protein uS10 family. In terms of assembly, part of the 30S ribosomal subunit.

Involved in the binding of tRNA to the ribosomes. The sequence is that of Small ribosomal subunit protein uS10 from Sphingopyxis alaskensis (strain DSM 13593 / LMG 18877 / RB2256) (Sphingomonas alaskensis).